The sequence spans 230 residues: Ribosomal RNA large subunit methyltransferase E (230 aa).

Glycine 76, tryptophan 78, aspartate 99, aspartate 115, and aspartate 139 together coordinate S-adenosyl-L-methionine. Lysine 179 serves as the catalytic Proton acceptor.

The protein belongs to the class I-like SAM-binding methyltransferase superfamily. RNA methyltransferase RlmE family.

Its subcellular location is the cytoplasm. The catalysed reaction is uridine(2552) in 23S rRNA + S-adenosyl-L-methionine = 2'-O-methyluridine(2552) in 23S rRNA + S-adenosyl-L-homocysteine + H(+). Its function is as follows. Specifically methylates the uridine in position 2552 of 23S rRNA at the 2'-O position of the ribose in the fully assembled 50S ribosomal subunit. The polypeptide is Ribosomal RNA large subunit methyltransferase E (Nitrobacter winogradskyi (strain ATCC 25391 / DSM 10237 / CIP 104748 / NCIMB 11846 / Nb-255)).